The primary structure comprises 206 residues: Glycerol-3-phosphate acyltransferase 1 (206 aa).

5 consecutive transmembrane segments (helical) span residues 7 to 27 (LVIGYFLGNILFAMIVTKIFL), 54 to 74 (ILTCIGDLAKTLAALLIVYFI), 81 to 101 (DLSFAGLGVVLGHSFPFWNHF), 114 to 134 (IVFFDWRAGLIALLIGLFLVI), and 155 to 175 (WINFGWEQGLIFLIATLIMIF).

Belongs to the PlsY family. As to quaternary structure, probably interacts with PlsX.

It is found in the cell membrane. It catalyses the reaction an acyl phosphate + sn-glycerol 3-phosphate = a 1-acyl-sn-glycero-3-phosphate + phosphate. Its pathway is lipid metabolism; phospholipid metabolism. Functionally, catalyzes the transfer of an acyl group from acyl-phosphate (acyl-PO(4)) to glycerol-3-phosphate (G3P) to form lysophosphatidic acid (LPA). This enzyme utilizes acyl-phosphate as fatty acyl donor, but not acyl-CoA or acyl-ACP. The polypeptide is Glycerol-3-phosphate acyltransferase 1 (Lactobacillus johnsonii (strain CNCM I-12250 / La1 / NCC 533)).